Here is a 263-residue protein sequence, read N- to C-terminus: Indole-3-glycerol phosphate synthase (263 aa).

This sequence belongs to the TrpC family.

The enzyme catalyses 1-(2-carboxyphenylamino)-1-deoxy-D-ribulose 5-phosphate + H(+) = (1S,2R)-1-C-(indol-3-yl)glycerol 3-phosphate + CO2 + H2O. It functions in the pathway amino-acid biosynthesis; L-tryptophan biosynthesis; L-tryptophan from chorismate: step 4/5. This Laribacter hongkongensis (strain HLHK9) protein is Indole-3-glycerol phosphate synthase.